The primary structure comprises 586 residues: Eukaryotic translation initiation factor 3 subunit D (586 aa).

Residues 102-176 are disordered; it reads SAKRTFGRGG…DKPQRTREPS (75 aa). Residues 162 to 174 show a composition bias toward basic and acidic residues; sequence GWKDYDKPQRTRE. The tract at residues 301 to 315 is RNA gate; that stretch reads SLDLVTVNENAADAP. Residues 567–586 form a disordered region; the sequence is EEEEEVAAEEQEAAEEEAEE.

Belongs to the eIF-3 subunit D family. Component of the eukaryotic translation initiation factor 3 (eIF-3) complex.

The protein resides in the cytoplasm. MRNA cap-binding component of the eukaryotic translation initiation factor 3 (eIF-3) complex, which is involved in protein synthesis of a specialized repertoire of mRNAs and, together with other initiation factors, stimulates binding of mRNA and methionyl-tRNAi to the 40S ribosome. The eIF-3 complex specifically targets and initiates translation of a subset of mRNAs involved in cell proliferation. In the eIF-3 complex, eif3d specifically recognizes and binds the 7-methylguanosine cap of a subset of mRNAs. This Aspergillus niger (strain ATCC MYA-4892 / CBS 513.88 / FGSC A1513) protein is Eukaryotic translation initiation factor 3 subunit D.